Consider the following 154-residue polypeptide: MIKYSIDELIQLKPSETLKVSFDHVEFRNIIEKVVELQKLKEEEFHSHHGNRRRSSHHHMKPKIKHNKPKVKTDADGWSTLEPATAGHEEESSSSATPAAAATTKTGAPQETIRVKPNNKNISSSRPADNSDIIADKQTHGFNAFAALEDEEDE.

The segment at 45-137 (FHSHHGNRRR…ADNSDIIADK (93 aa)) is disordered. Residues 48-70 (HHGNRRRSSHHHMKPKIKHNKPK) are compositionally biased toward basic residues. The span at 93–108 (SSSATPAAAATTKTGA) shows a compositional bias: low complexity. Over residues 118 to 128 (NNKNISSSRPA) the composition is skewed to polar residues.

The protein belongs to the CAF20 family.

The protein localises to the cytoplasm. Functionally, acts as an inhibitor of cap-dependent translation. Competes with eIF4G1 and EAP1 for binding to eIF4E and interferes with the formation of the eIF4F complex, inhibiting translation and stabilizing mRNA. In Candida glabrata (strain ATCC 2001 / BCRC 20586 / JCM 3761 / NBRC 0622 / NRRL Y-65 / CBS 138) (Yeast), this protein is Cap-associated protein CAF20 (CAF20).